The sequence spans 117 residues: Large ribosomal subunit protein uL18 (117 aa).

This sequence belongs to the universal ribosomal protein uL18 family. As to quaternary structure, part of the 50S ribosomal subunit; part of the 5S rRNA/L5/L18/L25 subcomplex. Contacts the 5S and 23S rRNAs.

In terms of biological role, this is one of the proteins that bind and probably mediate the attachment of the 5S RNA into the large ribosomal subunit, where it forms part of the central protuberance. This is Large ribosomal subunit protein uL18 from Photobacterium profundum (strain SS9).